A 318-amino-acid chain; its full sequence is Strigolactone esterase D14 (318 aa).

Positions 1–11 (MLRSTHPPPSS) are enriched in pro residues. Residues 1–48 (MLRSTHPPPSSPSSSSSGGGGGGGSSASSSSEKTMVGGGGGGGGGSGS) form a disordered region. Residues 36–47 (VGGGGGGGGGSG) show a composition bias toward gly residues. The Nucleophile role is filled by Ser-147. Substrate contacts are provided by Ser-147 and Cys-241. Active-site residues include Asp-268 and His-297. A substrate-binding site is contributed by His-297.

Belongs to the AB hydrolase superfamily. In terms of assembly, interacts with D53. The interaction between D53 and D14 is enhanced in the presence of strigolactones. The interaction with D53 occurs in the presence of (2'R) stereoisomers of strigolactones, but not (2'S) stereoisomers. Interacts with SLR1 in a strigolactone-dependent manner. Interacts with D3 in a strigolactone-dependent manner. Expressed in the parenchyma cells of the root stele and lateral roots, vascular tissues of vein and leaf sheath, ligule base, auricle base and stem base.

Its subcellular location is the cytoplasm. The protein resides in the nucleus. Functionally, involved in strigolactone (SL) signaling pathway. May function downstream of SL synthesis, as a component of hormone signaling or as an enzyme that participates in the conversion of SL to the bioactive form. Strigolactones are hormones that inhibit tillering and shoot branching through the MAX-dependent pathway, contribute to the regulation of shoot architectural response to phosphate-limiting conditions and function as rhizosphere signal that stimulates hyphal branching of arbuscular mycorrhizal fungi and trigger seed germination of root parasitic weeds. Strigolactone-dependent association of D14 with D3 and D53 (a repressor of SL signaling) triggers D53 ubiquitination and degradation. Hydrolyzes the butenolide ring of SLs. A reaction product D-OH is trapped in the cavity of D14, inducing the interaction with SLR1, and probably with other proteins such as D3 and D53. Contributes to the negative regulation of gibberellin signaling. This chain is Strigolactone esterase D14, found in Oryza sativa subsp. japonica (Rice).